We begin with the raw amino-acid sequence, 588 residues long: Phenol 2-monooxygenase fsqG (588 aa).

Residues 9–38 (DVLI…LIDW), 17–18 (PA), 37–39 (DWK), 45–50 (TGRADG), Y232, 289–299 (ARHNRIFLAGD), D299, and 309–313 (GQGMN) contribute to the FAD site. D49 and Y232 together coordinate substrate.

The protein belongs to the PheA/TfdB FAD monooxygenase family. Homodimer. It depends on FAD as a cofactor.

It participates in secondary metabolite biosynthesis. Phenol 2-monooxygenase; part of the gene cluster that mediates the biosynthesis of the isoquinoline alkaloids fumisoquin A, fumisoquin B and fumisoquin C; as well as small amounts of fumipyrrole as a shunt metabolite. The products of the cluster lead to a brown coloration and are important for growth and conidiation. The nonribosomal peptide synthetase-like protein fsqF, which lacks a canonical condensation domain, is required for addition of a serine-derived dehydroalanine moiety to activated tyrosine but is not essential for the subsequent steps leading to isoquinoline formation. A different enzyme, most likely the ATP-grasp enzyme fsqD, is responsible for activation of tyrosine. Three additional enzymes encoded by the fsq cluster, the N-methyltransferase fsqC, the phenol 2-monooxygenase fsqG and the FAD-dependent oxidase fsqB, catalyze the formation of the isoquinoline ring system in the fumisoquins. FsqB converts the fspF thiolation domain-bound (2S,4S,5S)-2-amino-6-(3,4-dihydroxyphenyl)-4-hydroxy-5-(methylamino)hexanoyl into isoquinoline. The cyclization most likely proceeds via a two-step mechanism, beginning with FAD-dependent oxidation of the methyl group to an iminium species followed by electrophilic attack on the deprotonated phenol. The sequence is that of Phenol 2-monooxygenase fsqG from Aspergillus fumigatus (strain ATCC MYA-4609 / CBS 101355 / FGSC A1100 / Af293) (Neosartorya fumigata).